Reading from the N-terminus, the 319-residue chain is F-box only protein 8 (319 aa).

In terms of domain architecture, F-box spans 68 to 111 (FINLEMLPPELSFTILSYLNATDLCLASCVWQDLANDELLWQGL). The region spanning 146 to 276 (FNANPDEGVN…LILLSIDLTS (131 aa)) is the SEC7 domain.

Functionally, may promote guanine-nucleotide exchange on an ARF. Promotes the activation of ARF through replacement of GDP with GTP (Potential). This Homo sapiens (Human) protein is F-box only protein 8 (FBXO8).